Here is a 541-residue protein sequence, read N- to C-terminus: MEFPYHSTVSYNGVTFYFNERATRAYFICGGCLISIPRKHGGEIAKFGHVVRGVGPGDRSVASYVRSELNRTGKTWAVSSNNNCVFLDRVALLAAGSGAVDRDLCGTFDVEVEDPTLADYLVSLPVTHLTLVAGVDVTRENKLKLFPTPTAINTTNGFMYVPNEASFSLVYMRMLELPEGLQELVSGLFDGTPEIRDALNGSNDDEKTSIIVSRRAADVVTEDVKADDVPISGEPYSEKQPRRRKKSDHITLSNFVQIRTIPRVMDIWDPRHKATTHCIRALSCAVFFADEVIFKARKWPGLEDELNEARETIYTAVVAVYGERGELPFFGHAYGRDLTSCQRFVIVQYILSRWEAFNCYAVIEDLTRSYVNALPSDDDTDQVAQDLIRTIVDTANSLLREVGFIGTLAETLLFLPLPQLPCYKETSHLAKKEGVRILRLAKTGVGLSDTVPVDVSVTERHEYEISRYLDTLYSGDPCYNGAVRLCRLLGSSIPIALYYNTISGNAFEPYFAGRRYIAYLGALFFGRVHQTPFGDGKKTQR.

Belongs to the alphaherpesvirinae UL21 protein family. As to quaternary structure, interacts (via C-terminus) with UL16.

Its subcellular location is the virion tegument. It localises to the host cytoplasm. The protein localises to the host nucleus. May participate in DNA packaging/capsid maturation events. Promotes efficient incorporation of tegument proteins UL46, UL49, and US3 homologs into virions. May also play a role in capsid transport to the trans-Golgi network (TGN). This Varicella-zoster virus (strain Oka vaccine) (HHV-3) protein is Tegument protein UL21 homolog.